A 944-amino-acid chain; its full sequence is MSMKFLTGLQDLLGLYETGTAASSPASPIPPTSPAMFAVPPQQQSHSAATSVRKKTCQDANSSGEDPNGRIRQCSHARTVSFPADMDLITGYHEAPSSLFHSYHDSQRVIDSSEILTAYREACQRRQCAPSAAVEKQIGYFHKSPDTRQELLSLKGERVSHAQMEALEEIFKRVQFNTIDFEYTFLDDDCAISLGEMIEFYDSCVRLNLSFNKQIDMRGWTTIFRSIRHAVSLQMLNLRYTNLNDRSIPALCKMARAQPSASLTCLHLENTQMSGKNLLVLICALKNNTGLRELYLGDNGLQPTDGSHIYQLITSNSSLQLLDLRNNSIGDSGVRHICDGLRHREAVEKSSLSAMVLWNNNVTGASMDSLAEALIENTKIETLNIGNNNLGVEGIARLKPALASNSHLHRLGLQNTGINCEGAIILAECIADNIALLRVDIRDNPIALAGLLALHSAMKMNTSITLLNIDASCVKLSSEKVREYQDEFERYFREIQTYCDRNKDDVLKRLTVTFDDEEGDSGVEKKDGNECEGEDNKDRQDTPAETENGVSSNESKLENEEVGVSKPESNNNEKSPLMASSSTSKLSRKERHQRFVRSSSLTCTETVHDIHDRLREMSGSTHSLDAAIAAAASNSTMQNLLTVSYGSNPGPLDSSSNSESMKTIKKSFTVTAASSSSLPLAEWGSLPALPQASPSSTPVVRKLRRFSVSPSSSVFDVATTSSAASSTASSPIPENSIALPVRPSTLAIGIPIIGSVPAGPSSAPLILVEDHKDGPITSNQISDTERRISEEIERQKKDEQEIEKSCRSVIRDLLNYVEYEEKSQVERKASLLLRNTFSRPNPEELLRNLRLSEATGSTTPRTPLTPSRYVQVFNINSFLKLYFIKACILRVLEIAEELEGESDEQICQSVIRCLVRDVLQAEKNELRSTLDRRRRHNSVRNSPV.

Residues 42-71 form a disordered region; the sequence is QQQSHSAATSVRKKTCQDANSSGEDPNGRI. 5 LRR repeats span residues 203 to 224, 232 to 255, 262 to 282, 290 to 311, and 318 to 338; these read SCVRLNLSFNKQIDMRGWTTIF, SLQMLNLRYTNLNDRSIPALCKMA, SLTCLHLENTQMSGKNLLVLI, GLRELYLGDNGLQPTDGSHIYQ, and SLQLLDLRNNSIGDSGVRHIC. The segment at 517–598 is disordered; the sequence is EEGDSGVEKK…KERHQRFVRS (82 aa). A compositionally biased stretch (basic and acidic residues) spans 522–542; the sequence is GVEKKDGNECEGEDNKDRQDT. Composition is skewed to polar residues over residues 543 to 554 and 567 to 585; these read PAETENGVSSNE and PESNNNEKSPLMASSSTSK. Positions 586–595 are enriched in basic residues; sequence LSRKERHQRF.

Belongs to the PPP1R37 family.

The sequence is that of Protein phosphatase 1 regulatory subunit 37 homolog from Caenorhabditis elegans.